The chain runs to 367 residues: FAD synthetase 2, chloroplastic (367 aa).

Residues 1-57 (MLCGGSRVLQHLSDHNHHNSIGLGLGFCGAKIVQLSSFFLRPSQAMAKSHHFSRKLR) constitute a chloroplast transit peptide.

The cofactor is Mg(2+).

Its subcellular location is the plastid. It is found in the chloroplast. It catalyses the reaction FMN + ATP + H(+) = FAD + diphosphate. Its pathway is cofactor biosynthesis; FAD biosynthesis; FAD from FMN: step 1/1. Its function is as follows. Catalyzes the adenylation of flavin mononucleotide (FMN) to form flavin adenine dinucleotide (FAD) coenzyme. The chain is FAD synthetase 2, chloroplastic from Arabidopsis thaliana (Mouse-ear cress).